Reading from the N-terminus, the 375-residue chain is Trichodiene synthase (375 aa).

This sequence belongs to the trichodiene synthase family.

It carries out the reaction (2E,6E)-farnesyl diphosphate = trichodiene + diphosphate. Its pathway is sesquiterpene biosynthesis; trichothecene biosynthesis. Functionally, TS is a member of the terpene cyclase group of enzymes. It catalyzes the isomerization and cyclization of farnesyl pyro-phosphate to form trichodiene, the first cyclic intermediate in the biosynthetic pathway for trichothecenes. It serves to branch trichothecene biosynthesis from the isoprenoid pathway. In Fusarium boothii, this protein is Trichodiene synthase (TRI5).